The primary structure comprises 193 residues: dTTP/UTP pyrophosphatase (193 aa).

Asp-77 serves as the catalytic Proton acceptor.

It belongs to the Maf family. YhdE subfamily. A divalent metal cation serves as cofactor.

The protein localises to the cytoplasm. The enzyme catalyses dTTP + H2O = dTMP + diphosphate + H(+). It catalyses the reaction UTP + H2O = UMP + diphosphate + H(+). Its function is as follows. Nucleoside triphosphate pyrophosphatase that hydrolyzes dTTP and UTP. May have a dual role in cell division arrest and in preventing the incorporation of modified nucleotides into cellular nucleic acids. The sequence is that of dTTP/UTP pyrophosphatase from Phocaeicola vulgatus (strain ATCC 8482 / DSM 1447 / JCM 5826 / CCUG 4940 / NBRC 14291 / NCTC 11154) (Bacteroides vulgatus).